We begin with the raw amino-acid sequence, 24 residues long: Carboxypeptidase 1 (24 aa).

Asn3 and Asn11 each carry an N-linked (GlcNAc...) asparagine glycan.

The protein belongs to the peptidase S10 family. Monomer. Contains both N- and O-linked sugar chains. The N-linked oligosaccharides are unique structures of Man(10)GlcNAc(2) and Man(11)GlcNAc(2). Deglycosylation does neither affect catalytic activity, pH, thermal stability, or resistance to proteolysis of the enzyme.

It is found in the secreted. Its activity is regulated as follows. Inhibited by DFP. Removes acidic, neutral and basic amino acids as well as proline from the C-terminal position. Digests preferentially peptides containing a hydrophobic residue in P1' position, as well as arginine, lysine or phenylalanine in P1 position of ester substrate. Catalyzes also peptide synthesis. This Aspergillus niger protein is Carboxypeptidase 1.